A 280-amino-acid polypeptide reads, in one-letter code: Urease accessory protein UreD 1 (280 aa).

This sequence belongs to the UreD family. UreD, UreF and UreG form a complex that acts as a GTP-hydrolysis-dependent molecular chaperone, activating the urease apoprotein by helping to assemble the nickel containing metallocenter of UreC. The UreE protein probably delivers the nickel.

Its subcellular location is the cytoplasm. Functionally, required for maturation of urease via the functional incorporation of the urease nickel metallocenter. This is Urease accessory protein UreD 1 from Brucella canis (strain ATCC 23365 / NCTC 10854 / RM-666).